A 57-amino-acid chain; its full sequence is Small hydrophobic protein (57 aa).

The Virion surface segment spans residues 1–8 (MPAIQPLL). A helical membrane pass occupies residues 9–29 (YLTFLLLILLYLIITLYVWVV). Residues 30–57 (STITYKTAVRHAALYQRSLFRWSLDHSL) are Intravirion-facing.

The protein belongs to the rubulavirus small hydrophobic protein family. In terms of assembly, interacts with host TNFRSF1A, RIPK1 and IRAK1; these interactions interfere with host NF-kappa-B activation at the level of receptor complexes. Interacts with host protein UBQLN4.

Its subcellular location is the virion membrane. It localises to the host cell membrane. Functionally, plays a role in the inhibition of the host NF-kappa-B pathway. This inhibition occurs at the receptor level, by preventing the signaling of TNFR1 as well as IL-1R and TLR3. The protein is Small hydrophobic protein (SH) of Homo sapiens (Human).